The following is a 545-amino-acid chain: Chaperonin GroEL 5 (545 aa).

Residues 30 to 33, Lys51, 87 to 91, Gly415, and Asp495 each bind ATP; these read TLGP and DGTTT.

This sequence belongs to the chaperonin (HSP60) family. As to quaternary structure, forms a cylinder of 14 subunits composed of two heptameric rings stacked back-to-back. Interacts with the co-chaperonin GroES.

The protein resides in the cytoplasm. It carries out the reaction ATP + H2O + a folded polypeptide = ADP + phosphate + an unfolded polypeptide.. Its function is as follows. Together with its co-chaperonin GroES, plays an essential role in assisting protein folding. The GroEL-GroES system forms a nano-cage that allows encapsulation of the non-native substrate proteins and provides a physical environment optimized to promote and accelerate protein folding. This Sinorhizobium medicae (strain WSM419) (Ensifer medicae) protein is Chaperonin GroEL 5.